Consider the following 281-residue polypeptide: Foldase protein PrsA (281 aa).

The signal sequence occupies residues 1–18 (MKKWMMAAAVVSLMALSA). The N-palmitoyl cysteine moiety is linked to residue C19. Residue C19 is the site of S-diacylglycerol cysteine attachment. Positions 133–223 (KPKIRASHIL…YGYHIIKVTD (91 aa)) constitute a PpiC domain.

This sequence belongs to the PrsA family.

The protein resides in the cell membrane. The catalysed reaction is [protein]-peptidylproline (omega=180) = [protein]-peptidylproline (omega=0). In terms of biological role, plays a major role in protein secretion by helping the post-translocational extracellular folding of several secreted proteins. This Geobacillus kaustophilus (strain HTA426) protein is Foldase protein PrsA.